The chain runs to 198 residues: IMP cyclohydrolase (198 aa).

Belongs to the archaeal IMP cyclohydrolase family.

The catalysed reaction is IMP + H2O = 5-formamido-1-(5-phospho-D-ribosyl)imidazole-4-carboxamide. Its pathway is purine metabolism; IMP biosynthesis via de novo pathway; IMP from 5-formamido-1-(5-phospho-D-ribosyl)imidazole-4-carboxamide: step 1/1. Catalyzes the cyclization of 5-formylamidoimidazole-4-carboxamide ribonucleotide to IMP. The protein is IMP cyclohydrolase of Thermococcus kodakarensis (strain ATCC BAA-918 / JCM 12380 / KOD1) (Pyrococcus kodakaraensis (strain KOD1)).